Consider the following 517-residue polypeptide: Nuclear receptor subfamily 5 group A member 2 (517 aa).

A DNA-binding region (nuclear receptor) is located at residues 43-118; that stretch reads DEMCPVCGDK…VGMKLEAVRA (76 aa). Zn(2+) contacts are provided by Cys46, Cys49, Cys63, Cys66, Cys82, Cys88, Cys98, and Cys101. 2 consecutive NR C4-type zinc fingers follow at residues 46–66 and 82–101; these read CPVC…CESC and CIEN…CPYC. Residues 112-127 form a C-terminal extension (CTE) region; sequence KLEAVRADRMRGGRNK. Residues 128-147 carry the FTZ-F1 box motif; that stretch reads FGPMYKRDRALKQQKKALIR. Residues 182–211 form a disordered region; the sequence is GLPLSHHHHHHHHHHHHSSSSAGLPPADFD. Residues 186-199 show a composition bias toward basic residues; sequence SHHHHHHHHHHHHS. The 240-residue stretch at 276-515 folds into the NR LBD domain; it reads SFPHLVVELL…NLLIEMLHAK (240 aa). Residues 397–400, Tyr492, and Lys496 contribute to the a phospholipid derivative site; that span reads GATL. Positions 504–515 are AF-2; the sequence is CNNLLIEMLHAK.

Belongs to the nuclear hormone receptor family. NR5 subfamily. As to quaternary structure, monomer; Binds DNA as a monomer.

It localises to the nucleus. The protein localises to the chromosome. Its function is as follows. Orphan nuclear receptor that binds DNA as a monomer to the 5'-TCAAGGCCA-3' sequence and controls expression of target genes: regulates key biological processes, such as cholesterol and bile acid synthesis pathways, as well as cartilage, liver and pancreas morphogenesis. Ligand-binding causes conformational change which causes recruitment of coactivators, promoting target gene activation. The specific ligand is unknown, but specific phospholipids, such as phosphatidylethanolamine, phosphatidylserine, dilauroyl phosphatidylcholine and diundecanoyl phosphatidylcholine can act as ligand in vitro. Acts as a pioneer transcription factor, which unwraps target DNA from histones and elicits local opening of closed chromatin. Involved in the formation of connective tissue in lower jaw. Functionally, lacks transcription factor activity; unable to activate expression of target genes. This chain is Nuclear receptor subfamily 5 group A member 2, found in Danio rerio (Zebrafish).